The sequence spans 1748 residues: RANBP2-like and GRIP domain-containing protein 1 (1748 aa).

Phosphothreonine is present on Thr-14. 3 TPR repeats span residues 51–84 (PRAH…NPPQ), 575–608 (QKMG…LKII), and 639–672 (EDAH…VSYW). The interval 751–796 (GPLYKNGSLRNADSEIKHSTPSPTKYSLSPSKSYKYSPKTPPRWAE) is disordered. Over residues 769–788 (STPSPTKYSLSPSKSYKYSP) the composition is skewed to low complexity. A RanBD1 1 domain is found at 1021-1157 (HFEPVVQMPE…FEECQRLLLD (137 aa)). 2 disordered regions span residues 1198–1233 (TKVT…TLEW) and 1291–1316 (AKLN…ERDG). Polar residues predominate over residues 1220–1229 (IKPNPENTGP). Residues 1302-1314 (TDEESDVTQEEER) are compositionally biased toward acidic residues. The RanBD1 2 domain occupies 1318-1454 (YFEPVVPLPD…FDEAKTAQEK (137 aa)). Positions 1565-1578 (NDSETSSVAQSGSE) are enriched in polar residues. The disordered stretch occupies residues 1565–1606 (NDSETSSVAQSGSESKVEPKKCELSKNSDIEQSSDSKVKNLS). Residues 1579–1602 (SKVEPKKCELSKNSDIEQSSDSKV) show a composition bias toward basic and acidic residues. The 51-residue stretch at 1685-1735 (QEESAANVEHLKNVLLQFIFLKPGSERESLLPVINTMLQLSPEEKGKLAAV) folds into the GRIP domain.

The polypeptide is RANBP2-like and GRIP domain-containing protein 1 (RGPD1) (Homo sapiens (Human)).